The following is a 280-amino-acid chain: Virginiamycin B lyase (280 aa).

Histidine 215 provides a ligand contact to substrate. Residue glutamate 254 coordinates Mg(2+). Histidine 256 (proton acceptor) is an active-site residue. Residue glutamate 271 coordinates Mg(2+).

This sequence belongs to the Vgb family. In terms of assembly, monomer. It depends on Mg(2+) as a cofactor.

Functionally, inactivates the type B streptogramin antibiotics by linearizing the lactone ring at the ester linkage, generating a free phenylglycine carboxylate and converting the threonyl moiety into 2-amino-butenoic acid. The polypeptide is Virginiamycin B lyase (Mycobacterium sp. (strain KMS)).